Reading from the N-terminus, the 466-residue chain is Clusterin-like protein 1 (466 aa).

The first 20 residues, 1–20 (MKPPLLVFIVCLLWLKDSHC), serve as a signal peptide directing secretion. Positions 57–111 (KQMKIMMERKEKEHTNLMSTLKKCREEKQEALKLLNEVQEHLEEEERLCRESLAD) form a coiled coil. Disulfide bonds link C105/C333, C116/C325, C119/C322, C124/C315, and C131/C305. N-linked (GlcNAc...) asparagine glycosylation is found at N196, N257, N311, N351, N412, and N431.

This sequence belongs to the clusterin family.

It localises to the secreted. In Homo sapiens (Human), this protein is Clusterin-like protein 1 (CLUL1).